A 449-amino-acid polypeptide reads, in one-letter code: Tryptophan--tRNA ligase (449 aa).

Residues 10–12 (TTT) and 18–19 (GN) each bind ATP. Positions 11-19 (TTGTPHLGN) match the 'HIGH' region motif. L-tryptophan is bound at residue Asp143. Residues 155 to 157 (GRD), Leu197, and 204 to 208 (KMSKS) each bind ATP. A 'KMSKS' region motif is present at residues 204 to 208 (KMSKS).

The protein belongs to the class-I aminoacyl-tRNA synthetase family. In terms of assembly, homodimer.

It is found in the cytoplasm. It carries out the reaction tRNA(Trp) + L-tryptophan + ATP = L-tryptophyl-tRNA(Trp) + AMP + diphosphate + H(+). In terms of biological role, catalyzes the attachment of tryptophan to tRNA(Trp). The polypeptide is Tryptophan--tRNA ligase (Pseudomonas syringae pv. tomato (strain ATCC BAA-871 / DC3000)).